We begin with the raw amino-acid sequence, 118 residues long: MSRVKRGVTARARHKKVLNQAKGYYGARSRVYRVAKQAVIKAGQYAYRDRKVKKRTFRSLWIVRINAAARQHDISYSQLINGLNKAGVELDRKALAELAVYNKDAFAAVVEKAKAALA.

Belongs to the bacterial ribosomal protein bL20 family.

Its function is as follows. Binds directly to 23S ribosomal RNA and is necessary for the in vitro assembly process of the 50S ribosomal subunit. It is not involved in the protein synthesizing functions of that subunit. This chain is Large ribosomal subunit protein bL20, found in Francisella tularensis subsp. tularensis (strain WY96-3418).